A 415-amino-acid chain; its full sequence is UDP-N-acetylglucosamine 1-carboxyvinyltransferase 1 (415 aa).

23 to 24 (KN) provides a ligand contact to phosphoenolpyruvate. UDP-N-acetyl-alpha-D-glucosamine is bound at residue Arg-92. The active-site Proton donor is Cys-116. Cys-116 is modified (2-(S-cysteinyl)pyruvic acid O-phosphothioketal). Residues 121-125 (RPIDL), Asp-304, and Val-326 each bind UDP-N-acetyl-alpha-D-glucosamine.

This sequence belongs to the EPSP synthase family. MurA subfamily.

The protein resides in the cytoplasm. It carries out the reaction phosphoenolpyruvate + UDP-N-acetyl-alpha-D-glucosamine = UDP-N-acetyl-3-O-(1-carboxyvinyl)-alpha-D-glucosamine + phosphate. It participates in cell wall biogenesis; peptidoglycan biosynthesis. Cell wall formation. Adds enolpyruvyl to UDP-N-acetylglucosamine. This Caldanaerobacter subterraneus subsp. tengcongensis (strain DSM 15242 / JCM 11007 / NBRC 100824 / MB4) (Thermoanaerobacter tengcongensis) protein is UDP-N-acetylglucosamine 1-carboxyvinyltransferase 1.